Here is a 92-residue protein sequence, read N- to C-terminus: MNDYKLEEDPVTKERTFKRFAPRKGDKIYQEFKKLYFYSDAYRPLKFACETIIEEYEDEISSLIAQETHYLADKLCSEKSDLCETSANHTEL.

This sequence belongs to the canopy family.

The chain is Protein canopy homolog 1 (CNPY1) from Homo sapiens (Human).